The following is a 381-amino-acid chain: Cyclic AMP-AMP-GMP synthase (381 aa).

6 residues coordinate ATP: glutamine 51, serine 53, arginine 56, aspartate 69, aspartate 71, and arginine 109. Catalysis depends on residues aspartate 69 and aspartate 71. Mg(2+) contacts are provided by aspartate 69 and aspartate 71. Residue aspartate 121 is part of the active site. Aspartate 121 and aspartate 196 together coordinate Mg(2+). ATP is bound by residues aspartate 196, arginine 197, arginine 204, threonine 205, glutamine 210, lysine 233, and tyrosine 250. Asparagine 258 and leucine 260 together coordinate Mg(2+). ATP contacts are provided by valine 304 and arginine 307. The disordered stretch occupies residues 348 to 381 (GSKFPLPGPQGGDRNGGFTTPSKPAEPQKTGRFA).

The protein belongs to the CD-NTase family. D02 subfamily. Monomer. Crystallizes as a Cap2 homodimer bound on each side by a CdnD monomer. The cofactor is Mg(2+). In terms of processing, in bacteria expressing cap4-dncV-cap2-cap3, this protein is conjugated to a number of other proteins by Cap2, probably via this protein's C-terminal Ala residue. More conjugated DncV is found in the absence of Cap3.

It catalyses the reaction GTP + 2 ATP = 3',3',3'-cAAG + 3 diphosphate. With respect to regulation, primed for activation by Cap2 which conjugates it to cellular proteins; activation is target protein-specific (green fluorescent protein does not activate the enzyme), but which protein(s) activate it is unclear. In terms of biological role, cyclic nucleotide synthase (second messenger synthase) of a CBASS antivirus system. CBASS (cyclic oligonucleotide-based antiphage signaling system) provides immunity against bacteriophages. The CD-NTase protein (CdnD, this protein) synthesizes cyclic nucleotides in response to infection; these serve as specific second messenger signals. The signals activate a diverse range of effectors, leading to bacterial cell death and thus abortive phage infection. A type II-C(AAG) CBASS system. Its function is as follows. Cyclic trinucleotide synthase that catalyzes the synthesis of 3',3',3'-cyclic AMP-AMP-GMP (cAAG) as the major product, a second messenger for cell signal transduction. Uses ATP as the first donor nucleotide, followed by GTP. Protects E.coli against phage T2 infection. When the cdnD-cap2-cap3-cap4 operon is introduced in E.coli there is a more than 10(3) decrease in the efficiency of T2 plaque formation. The operon does not protect against phage T5 and only about 10-fold against T7. Expression of cdnD-cap4 alone protects E.coli against phage T2 infection. This Enterobacter hormaechei subsp. hoffmannii (strain UCI 50) protein is Cyclic AMP-AMP-GMP synthase.